The sequence spans 563 residues: Eukaryotic translation initiation factor 3 subunit D-1 (563 aa).

Positions valine 98–serine 167 are disordered. Over residues lysine 100 to asparagine 121 the composition is skewed to basic residues. Threonine 128 is subject to Phosphothreonine. Positions glutamate 291–proline 305 are RNA gate.

Belongs to the eIF-3 subunit D family. In terms of assembly, component of the eukaryotic translation initiation factor 3 (eIF-3) complex. The eIF-3 complex interacts with pix.

The protein localises to the cytoplasm. Its function is as follows. mRNA cap-binding component of the eukaryotic translation initiation factor 3 (eIF-3) complex, which is involved in protein synthesis of a specialized repertoire of mRNAs and, together with other initiation factors, stimulates binding of mRNA and methionyl-tRNAi to the 40S ribosome. The eIF-3 complex specifically targets and initiates translation of a subset of mRNAs involved in cell proliferation. In the eIF-3 complex, eif3d specifically recognizes and binds the 7-methylguanosine cap of a subset of mRNAs. This is Eukaryotic translation initiation factor 3 subunit D-1 from Drosophila mojavensis (Fruit fly).